The following is a 258-amino-acid chain: GTP cyclohydrolase FolE2 (258 aa).

The protein belongs to the GTP cyclohydrolase IV family.

The enzyme catalyses GTP + H2O = 7,8-dihydroneopterin 3'-triphosphate + formate + H(+). The protein operates within cofactor biosynthesis; 7,8-dihydroneopterin triphosphate biosynthesis; 7,8-dihydroneopterin triphosphate from GTP: step 1/1. In terms of biological role, converts GTP to 7,8-dihydroneopterin triphosphate. The chain is GTP cyclohydrolase FolE2 from Pseudothermotoga lettingae (strain ATCC BAA-301 / DSM 14385 / NBRC 107922 / TMO) (Thermotoga lettingae).